A 197-amino-acid polypeptide reads, in one-letter code: CASP-like protein 1B1 (197 aa).

Alanine 2 bears the N-acetylalanine mark. Over 2–17 the chain is Cytoplasmic; that stretch reads AVSKLTLAATSGKSCK. A helical membrane pass occupies residues 18–38; the sequence is ILLGLRLLAFSATLSAAIVMG. Over 39–69 the chain is Extracellular; that stretch reads LNKETKTFIVGKVGNTPIQATFTAKFDHTPA. Residues 70 to 90 traverse the membrane as a helical segment; the sequence is FVFFVVANAMVSFHNLLMIAL. The Cytoplasmic portion of the chain corresponds to 91 to 106; that stretch reads QIFGGKMEFTGFRLLS. A helical transmembrane segment spans residues 107 to 127; that stretch reads VAILDMLNVTLISAAANAAAF. Over 128–156 the chain is Extracellular; that stretch reads MAEVGKNGNKHARWDKICDRFATYCDHGA. The chain crosses the membrane as a helical span at residues 157-177; the sequence is GALIAAFAGVILMLIISAASI. At 178 to 197 the chain is on the cytoplasmic side; it reads SRLVQPNKCCSTTASPSVVP.

It belongs to the Casparian strip membrane proteins (CASP) family. Homodimer and heterodimers.

It localises to the cell membrane. The polypeptide is CASP-like protein 1B1 (Arabidopsis thaliana (Mouse-ear cress)).